The chain runs to 606 residues: Sulfite reductase [NADPH] flavoprotein alpha-component (606 aa).

Residues 68–206 (ITILSASQTG…AAEAWRKEVT (139 aa)) form the Flavodoxin-like domain. FMN is bound by residues 74 to 79 (SQTGNA), 121 to 124 (STQG), and 157 to 166 (LGDITYEHFA). One can recognise an FAD-binding FR-type domain in the interval 240-454 (ESPLTATLSV…VEHNDNFRLP (215 aa)). FAD-binding positions include T328, Q362, 392-395 (RLYS), 410-412 (TVG), Y416, and 425-428 (GGAS). NADP(+) is bound by residues 525–526 (SR), 531–535 (KVYVQ), and D568. Y606 contributes to the FAD binding site.

The protein belongs to the NADPH-dependent sulphite reductase flavoprotein subunit CysJ family. This sequence in the N-terminal section; belongs to the flavodoxin family. In the C-terminal section; belongs to the flavoprotein pyridine nucleotide cytochrome reductase family. As to quaternary structure, alpha(8)-beta(8). The alpha component is a flavoprotein, the beta component is a hemoprotein. FAD is required as a cofactor. It depends on FMN as a cofactor.

The enzyme catalyses hydrogen sulfide + 3 NADP(+) + 3 H2O = sulfite + 3 NADPH + 4 H(+). It functions in the pathway sulfur metabolism; hydrogen sulfide biosynthesis; hydrogen sulfide from sulfite (NADPH route): step 1/1. Its function is as follows. Component of the sulfite reductase complex that catalyzes the 6-electron reduction of sulfite to sulfide. This is one of several activities required for the biosynthesis of L-cysteine from sulfate. The flavoprotein component catalyzes the electron flow from NADPH -&gt; FAD -&gt; FMN to the hemoprotein component. This is Sulfite reductase [NADPH] flavoprotein alpha-component from Zymomonas mobilis subsp. mobilis (strain ATCC 31821 / ZM4 / CP4).